Consider the following 151-residue polypeptide: Small ribosomal subunit protein uS19 (151 aa).

The residue at position 2 (A2) is an N-acetylalanine.

Belongs to the universal ribosomal protein uS19 family.

Functionally, negatively regulates lifespan. In Caenorhabditis elegans, this protein is Small ribosomal subunit protein uS19.